The following is a 464-amino-acid chain: tRNA(Ile2) 2-agmatinylcytidine synthetase TiaS (464 aa).

Belongs to the TiaS family.

It is found in the cytoplasm. It carries out the reaction cytidine(34) in tRNA(Ile2) + agmatine + ATP + H2O = 2-agmatinylcytidine(34) in tRNA(Ile2) + AMP + 2 phosphate + 2 H(+). Its function is as follows. ATP-dependent agmatine transferase that catalyzes the formation of 2-agmatinylcytidine (agm2C) at the wobble position (C34) of tRNA(Ile2), converting the codon specificity from AUG to AUA. In Ignisphaera aggregans (strain DSM 17230 / JCM 13409 / AQ1.S1), this protein is tRNA(Ile2) 2-agmatinylcytidine synthetase TiaS.